The following is a 254-amino-acid chain: Casein kinase II subunit beta-2 (254 aa).

Belongs to the casein kinase 2 subunit beta family. As to quaternary structure, tetramer composed of two alpha chains, one beta chain and one beta' chain. Phosphorylated by alpha subunit.

Regulatory subunit of casein kinase II/CK2. As part of the kinase complex regulates the basal catalytic activity of the alpha subunit a constitutively active serine/threonine-protein kinase that phosphorylates a large number of substrates containing acidic residues C-terminal to the phosphorylated serine or threonine. This Schizosaccharomyces pombe (strain 972 / ATCC 24843) (Fission yeast) protein is Casein kinase II subunit beta-2.